The primary structure comprises 622 residues: MNKFFSFPILGLLLTCVRFVVAKERLFEWNVTDVYDVDPDGSGNSRWVIGVNNKWPIDPLVVDYGDQVIIKMTNSLANNRTTSLHSHGLFQKFTPYMDGVPQSTQCEIPPGATFYYNYTALQNGTYWVHSHDMSQYPDGLRTPFIINALEEPYDYDEEYIISMTDWYYTPFNILVPDEFKTWKNPTGAEPVPDTGLFNDTANATFAMEPGKTYRLRFINIGAFNNYDVMIEDHNMTIIEVDGEYTEPQEVSSIHLTVAQRYSVLVTAKNSTDRNYAITAYMDESLFDTIPDNYNPNVTAWLSYNSDASYDLGPDIDEIDSYDDAELNPLYSWDVTESNHSINIWFDFFTLGDGANYAEINDSSYVFPKVPSIMIANSTNVDGYNLEPVTYGPYTNAYIFEYGDVVDVIIDNHDTGKHPFHLHGHTFQVLERGEENAGLYSDQESHTYYDNPMRRDTVEIEPGSFIVIRFIADNPGAWVIHCHIEWHMESGLLATFIEAPEMIPSISSPDFVKEQCMLDGVPTIGNGAGNYKNISDLSGAPSPPGEMPAGWTSKAIGTMAACVISACIGMGSIIFYGASIHPVPTEELDENDDLQEAALENAAMFLDTDKAVEKVVEGKDEIK.

A signal peptide spans 1 to 22 (MNKFFSFPILGLLLTCVRFVVA). Over 23–553 (KERLFEWNVT…GEMPAGWTSK (531 aa)) the chain is Extracellular. N-linked (GlcNAc...) asparagine glycosylation is found at N30 and N79. Plastocyanin-like domains lie at 49–147 (IGVN…FIIN) and 194–304 (TGLF…LSYN). H85 and H87 together coordinate Cu cation. Residues N117 and N123 are each glycosylated (N-linked (GlcNAc...) asparagine). Cu cation contacts are provided by H129 and H131. N-linked (GlcNAc...) asparagine glycans are attached at residues N198, N202, N234, N269, N296, N338, N360, and N376. The 113-residue stretch at 386–498 (EPVTYGPYTN…SGLLATFIEA (113 aa)) folds into the Plastocyanin-like 3 domain. Residues H417, H420, H422, H480, C481, H482, and H486 each coordinate Cu cation. N-linked (GlcNAc...) asparagine glycosylation occurs at N532. The helical transmembrane segment at 554-574 (AIGTMAACVISACIGMGSIIF) threads the bilayer. Residues 575–622 (YGASIHPVPTEELDENDDLQEAALENAAMFLDTDKAVEKVVEGKDEIK) lie on the Cytoplasmic side of the membrane.

Belongs to the multicopper oxidase family. Cu cation is required as a cofactor.

The protein localises to the cell membrane. In terms of biological role, could be an iron transport multicopper oxidase, which is required for Fe(2+) high affinity uptake. May be required to oxidize Fe(2+) and release it from the transporter. Essential component of copper-dependent iron transport. The protein is Iron transport multicopper oxidase fio1 (fio1) of Schizosaccharomyces pombe (strain 972 / ATCC 24843) (Fission yeast).